The following is a 313-amino-acid chain: Ribosomal RNA small subunit methyltransferase H (313 aa).

Residues Gly-35 to Tyr-37, Asp-53, Phe-80, Asp-101, and Gln-108 each bind S-adenosyl-L-methionine.

This sequence belongs to the methyltransferase superfamily. RsmH family.

Its subcellular location is the cytoplasm. It catalyses the reaction cytidine(1402) in 16S rRNA + S-adenosyl-L-methionine = N(4)-methylcytidine(1402) in 16S rRNA + S-adenosyl-L-homocysteine + H(+). Its function is as follows. Specifically methylates the N4 position of cytidine in position 1402 (C1402) of 16S rRNA. The protein is Ribosomal RNA small subunit methyltransferase H of Acidiphilium cryptum (strain JF-5).